The primary structure comprises 313 residues: Aspartate carbamoyltransferase catalytic subunit (313 aa).

Carbamoyl phosphate-binding residues include Arg58 and Thr59. Lys86 is an L-aspartate binding site. Carbamoyl phosphate contacts are provided by Arg108, His136, and Gln139. 2 residues coordinate L-aspartate: Arg169 and Arg223. The carbamoyl phosphate site is built by Gly264 and Pro265.

This sequence belongs to the aspartate/ornithine carbamoyltransferase superfamily. ATCase family. As to quaternary structure, heterododecamer (2C3:3R2) of six catalytic PyrB chains organized as two trimers (C3), and six regulatory PyrI chains organized as three dimers (R2).

The enzyme catalyses carbamoyl phosphate + L-aspartate = N-carbamoyl-L-aspartate + phosphate + H(+). It functions in the pathway pyrimidine metabolism; UMP biosynthesis via de novo pathway; (S)-dihydroorotate from bicarbonate: step 2/3. In terms of biological role, catalyzes the condensation of carbamoyl phosphate and aspartate to form carbamoyl aspartate and inorganic phosphate, the committed step in the de novo pyrimidine nucleotide biosynthesis pathway. This Syntrophotalea carbinolica (strain DSM 2380 / NBRC 103641 / GraBd1) (Pelobacter carbinolicus) protein is Aspartate carbamoyltransferase catalytic subunit.